A 102-amino-acid chain; its full sequence is Small ribosomal subunit protein eS24 (102 aa).

This sequence belongs to the eukaryotic ribosomal protein eS24 family.

This Methanococcoides burtonii (strain DSM 6242 / NBRC 107633 / OCM 468 / ACE-M) protein is Small ribosomal subunit protein eS24.